The following is a 218-amino-acid chain: Small ribosomal subunit protein uS5 (218 aa).

The segment at 1-49 is disordered; it reads MPGRQRRDGGSGPAGQNGPNTGDNRGGGDRRGGGRDDRRGGQSAEKSNH. The segment covering 26–49 has biased composition (basic and acidic residues); it reads GGGDRRGGGRDDRRGGQSAEKSNH. The region spanning 49-112 is the S5 DRBM domain; that stretch reads HIERVVTINR…EEARKSFFRV (64 aa).

It belongs to the universal ribosomal protein uS5 family. As to quaternary structure, part of the 30S ribosomal subunit. Contacts proteins S4 and S8.

Its function is as follows. With S4 and S12 plays an important role in translational accuracy. In terms of biological role, located at the back of the 30S subunit body where it stabilizes the conformation of the head with respect to the body. The chain is Small ribosomal subunit protein uS5 from Rhodococcus jostii (strain RHA1).